Consider the following 127-residue polypeptide: Protein translocase subunit SecE (127 aa).

The Cytoplasmic segment spans residues 1–19 (MSANTEAQGSGRGLEAMKW). The helical transmembrane segment at 20–32 (VVVVALLLVAIVG) threads the bilayer. Residues 33–48 (NYLYRDIMLPLRALAV) are Periplasmic-facing. A helical membrane pass occupies residues 49-60 (VILIAAAGGVAL). Residues 61-97 (LTTKGKATVAFAREARTEVRKVIWPTRQETLHTTLIV) lie on the Cytoplasmic side of the membrane. Residues 98–115 (AAVTAVMSLILWGLDGIL) form a helical membrane-spanning segment. Topologically, residues 116-127 (VRLVSFITGLRF) are periplasmic.

The protein belongs to the SecE/SEC61-gamma family. As to quaternary structure, component of the Sec protein translocase complex. Heterotrimer consisting of SecY, SecE and SecG subunits. The heterotrimers can form oligomers, although 1 heterotrimer is thought to be able to translocate proteins. Interacts with the ribosome. Interacts with SecDF, and other proteins may be involved. Interacts with SecA.

The protein resides in the cell inner membrane. In terms of biological role, essential subunit of the Sec protein translocation channel SecYEG. Clamps together the 2 halves of SecY. May contact the channel plug during translocation. The chain is Protein translocase subunit SecE from Escherichia coli O157:H7.